The sequence spans 189 residues: MAREGEGGRGRDREERDSEFMDRLVHINRVAKVVKGGRRFGFAALVVVGDQKGRVGFGHGKAREVPEAIRKATESAKRSLIRVPLREGRTLHHDVNGRHGAGRVVLRAAPAGTGIIAGGPMRAIFETLGMHDVVAKSQGSSNPYNMVRATFDALGRQDSPRAVAARRNLKVSVLQGRRPGGEAEAASEA.

The S5 DRBM domain maps to 20–83 (FMDRLVHINR…ESAKRSLIRV (64 aa)).

Belongs to the universal ribosomal protein uS5 family. Part of the 30S ribosomal subunit. Contacts proteins S4 and S8.

Its function is as follows. With S4 and S12 plays an important role in translational accuracy. Located at the back of the 30S subunit body where it stabilizes the conformation of the head with respect to the body. The sequence is that of Small ribosomal subunit protein uS5 from Methylocella silvestris (strain DSM 15510 / CIP 108128 / LMG 27833 / NCIMB 13906 / BL2).